The primary structure comprises 196 residues: Protein GrpE (196 aa).

Positions 1-24 are disordered; that stretch reads MAENERTTENFQPQDPSYAEAATT.

It belongs to the GrpE family. Homodimer.

It localises to the cytoplasm. In terms of biological role, participates actively in the response to hyperosmotic and heat shock by preventing the aggregation of stress-denatured proteins, in association with DnaK and GrpE. It is the nucleotide exchange factor for DnaK and may function as a thermosensor. Unfolded proteins bind initially to DnaJ; upon interaction with the DnaJ-bound protein, DnaK hydrolyzes its bound ATP, resulting in the formation of a stable complex. GrpE releases ADP from DnaK; ATP binding to DnaK triggers the release of the substrate protein, thus completing the reaction cycle. Several rounds of ATP-dependent interactions between DnaJ, DnaK and GrpE are required for fully efficient folding. This Gloeobacter violaceus (strain ATCC 29082 / PCC 7421) protein is Protein GrpE.